The primary structure comprises 101 residues: Small ribosomal subunit protein uS14 (101 aa).

It belongs to the universal ribosomal protein uS14 family. In terms of assembly, part of the 30S ribosomal subunit. Contacts proteins S3 and S10.

Its function is as follows. Binds 16S rRNA, required for the assembly of 30S particles and may also be responsible for determining the conformation of the 16S rRNA at the A site. The protein is Small ribosomal subunit protein uS14 of Acinetobacter baumannii (strain AB307-0294).